We begin with the raw amino-acid sequence, 328 residues long: 4-hydroxythreonine-4-phosphate dehydrogenase (328 aa).

Substrate-binding residues include H134 and T135. A divalent metal cation is bound by residues H164, H209, and H264. Substrate is bound by residues K272, N281, and R290.

Belongs to the PdxA family. In terms of assembly, homodimer. The cofactor is Zn(2+). Mg(2+) is required as a cofactor. It depends on Co(2+) as a cofactor.

Its subcellular location is the cytoplasm. The catalysed reaction is 4-(phosphooxy)-L-threonine + NAD(+) = 3-amino-2-oxopropyl phosphate + CO2 + NADH. It participates in cofactor biosynthesis; pyridoxine 5'-phosphate biosynthesis; pyridoxine 5'-phosphate from D-erythrose 4-phosphate: step 4/5. Catalyzes the NAD(P)-dependent oxidation of 4-(phosphooxy)-L-threonine (HTP) into 2-amino-3-oxo-4-(phosphooxy)butyric acid which spontaneously decarboxylates to form 3-amino-2-oxopropyl phosphate (AHAP). The chain is 4-hydroxythreonine-4-phosphate dehydrogenase from Shewanella denitrificans (strain OS217 / ATCC BAA-1090 / DSM 15013).